The primary structure comprises 179 residues: Large ribosomal subunit protein uL5 (179 aa).

The protein belongs to the universal ribosomal protein uL5 family. Part of the 50S ribosomal subunit; part of the 5S rRNA/L5/L18/L25 subcomplex. Contacts the 5S rRNA and the P site tRNA. Forms a bridge to the 30S subunit in the 70S ribosome.

In terms of biological role, this is one of the proteins that bind and probably mediate the attachment of the 5S RNA into the large ribosomal subunit, where it forms part of the central protuberance. In the 70S ribosome it contacts protein S13 of the 30S subunit (bridge B1b), connecting the 2 subunits; this bridge is implicated in subunit movement. Contacts the P site tRNA; the 5S rRNA and some of its associated proteins might help stabilize positioning of ribosome-bound tRNAs. This is Large ribosomal subunit protein uL5 from Buchnera aphidicola subsp. Schizaphis graminum (strain Sg).